The following is a 307-amino-acid chain: Zinc transporter ZIP9 (307 aa).

The chain crosses the membrane as a helical span at residues 4–24 (FISISLLSLAMLVGCYVAGII). N-linked (GlcNAc...) asparagine glycosylation is present at Asn-29. Helical transmembrane passes span 35-55 (LKLV…AVIV), 106-126 (AYIG…DQIG), 146-166 (ITTT…LGAA), 176-196 (LIVF…LVSF), and 210-230 (HLLV…LGLS). N-linked (GlcNAc...) asparagine glycosylation occurs at Asn-241. 2 consecutive transmembrane segments (helical) span residues 244–264 (GVAM…HVLP) and 286–306 (LEVA…VGHQ).

This sequence belongs to the ZIP transporter (TC 2.A.5) family. In terms of tissue distribution, highly expressed in pancreas, testis, and pituitary and moderately in the kidney, liver, uterus, heart, prostate, and brain, whereas expression is lower in the ovary and colon.

It localises to the golgi apparatus. Its subcellular location is the trans-Golgi network membrane. The protein resides in the cell membrane. It is found in the cytoplasm. The protein localises to the perinuclear region. It localises to the mitochondrion. Its subcellular location is the nucleus. The catalysed reaction is Zn(2+)(in) = Zn(2+)(out). Functionally, transports zinc ions across cell and organelle membranes into the cytoplasm and regulates intracellular zinc homeostasis. Participates in the zinc ions efflux out of the secretory compartments. Regulates intracellular zinc level, resulting in the enhancement of AKT1 and MAPK3/MAPK1 (Erk1/2) phosphorylation in response to the BCR activation. Also functions as a membrane androgen receptor that mediates, through a G protein, the non-classical androgen signaling pathway, characterized by the activation of MAPK3/MAPK1 (Erk1/2) and transcription factors CREB1 or ATF1. This pathway contributes to CLDN1 and CLDN5 expression and tight junction formation between adjacent Sertoli cells. Mediates androgen-induced vascular endothelial cell proliferation through activation of an inhibitory G protein leading to the AKT1 and MAPK3/MAPK1 (Erk1/2) activation which in turn modulate inhibition (phosphorylation) of GSK3B and CCND1 transcription. Moreover, has dual functions as a membrane-bound androgen receptor and as an androgen-dependent zinc transporter both of which are mediated through an inhibitory G protein (Gi) that mediates both MAP kinase and zinc signaling leading to the androgen-dependent apoptotic process. This Homo sapiens (Human) protein is Zinc transporter ZIP9.